The chain runs to 66 residues: Large ribosomal subunit protein bL35 (66 aa).

A compositionally biased stretch (basic residues) spans M1 to L44. A disordered region spans residues M1–A48.

This sequence belongs to the bacterial ribosomal protein bL35 family.

The sequence is that of Large ribosomal subunit protein bL35 from Legionella pneumophila (strain Corby).